The sequence spans 307 residues: Aspartate carbamoyltransferase catalytic subunit (307 aa).

Residues arginine 58 and threonine 59 each coordinate carbamoyl phosphate. Residue lysine 86 participates in L-aspartate binding. 3 residues coordinate carbamoyl phosphate: arginine 108, histidine 136, and glutamine 139. Positions 169 and 223 each coordinate L-aspartate. Carbamoyl phosphate-binding residues include glycine 264 and proline 265.

Belongs to the aspartate/ornithine carbamoyltransferase superfamily. ATCase family. In terms of assembly, heterododecamer (2C3:3R2) of six catalytic PyrB chains organized as two trimers (C3), and six regulatory PyrI chains organized as three dimers (R2).

The catalysed reaction is carbamoyl phosphate + L-aspartate = N-carbamoyl-L-aspartate + phosphate + H(+). It functions in the pathway pyrimidine metabolism; UMP biosynthesis via de novo pathway; (S)-dihydroorotate from bicarbonate: step 2/3. Its function is as follows. Catalyzes the condensation of carbamoyl phosphate and aspartate to form carbamoyl aspartate and inorganic phosphate, the committed step in the de novo pyrimidine nucleotide biosynthesis pathway. This is Aspartate carbamoyltransferase catalytic subunit from Syntrophus aciditrophicus (strain SB).